Consider the following 137-residue polypeptide: MSSRRLLKAAEAIREVVANAIVTEVRDPRVRDVTVIGVEVSPDMREAKVKVSVMGDETQKNLSLRGLQNSAGFLQSKIANRMDTRYTPKLRFEVDRGQENAMTVSEILARIQQEKEGATDDRDQNDSGEDATPHSND.

The disordered stretch occupies residues 110 to 137 (RIQQEKEGATDDRDQNDSGEDATPHSND). The span at 112 to 125 (QQEKEGATDDRDQN) shows a compositional bias: basic and acidic residues.

This sequence belongs to the RbfA family. As to quaternary structure, monomer. Binds 30S ribosomal subunits, but not 50S ribosomal subunits or 70S ribosomes.

Its subcellular location is the cytoplasm. One of several proteins that assist in the late maturation steps of the functional core of the 30S ribosomal subunit. Associates with free 30S ribosomal subunits (but not with 30S subunits that are part of 70S ribosomes or polysomes). Required for efficient processing of 16S rRNA. May interact with the 5'-terminal helix region of 16S rRNA. The chain is Ribosome-binding factor A from Rhodopirellula baltica (strain DSM 10527 / NCIMB 13988 / SH1).